We begin with the raw amino-acid sequence, 236 residues long: Uridylate kinase (236 aa).

Lys-10–Gly-13 lines the ATP pocket. Gly-52 serves as a coordination point for UMP. Residues Gly-53 and Arg-57 each contribute to the ATP site. UMP contacts are provided by residues Asp-72 and Thr-133–Thr-140. ATP contacts are provided by Thr-160, Tyr-166, and Asp-169.

This sequence belongs to the UMP kinase family. As to quaternary structure, homohexamer.

The protein resides in the cytoplasm. The catalysed reaction is UMP + ATP = UDP + ADP. Its pathway is pyrimidine metabolism; CTP biosynthesis via de novo pathway; UDP from UMP (UMPK route): step 1/1. Its activity is regulated as follows. Inhibited by UTP. Catalyzes the reversible phosphorylation of UMP to UDP. This Ralstonia nicotianae (strain ATCC BAA-1114 / GMI1000) (Ralstonia solanacearum) protein is Uridylate kinase.